We begin with the raw amino-acid sequence, 436 residues long: Prenyltransferase nscD (436 aa).

This sequence belongs to the tryptophan dimethylallyltransferase family.

It functions in the pathway secondary metabolite biosynthesis. Prenyltransferase; part of the gene cluster that mediates the biosynthesis of neosartoricin B, a prenylated anthracenone that probably exhibits T-cell antiproliferative activity, suggestive of a physiological role as an immunosuppressive agent. The non-reducing polyketide synthase nscA probably synthesizes and cyclizes the decaketide backbone. The hydrolase nscB then mediates the product release through hydrolysis followed by spontaneous decarboxylation. The prenyltransferase nscD catalyzes the addition of the dimethylallyl group to the aromatic C5. The FAD-dependent monooxygenase nscC is then responsible for the stereospecific hydroxylation at C2. Neosartoricin B can be converted into two additional compounds neosartoricins C and D. Neosartoricin C is a spirocyclic compound that is cyclized through the attack of C3 hydroxyl on C14, followed by dehydration. On the other hand, neosartoricin D is a further cyclized compound in which attack of C2 on C14 in neosartoricin C results in the formation of the acetal-containing dioxabicyclo-octanone ring. Both of these compounds are novel and possibly represent related metabolites of the gene cluster. The polypeptide is Prenyltransferase nscD (Arthroderma otae (strain ATCC MYA-4605 / CBS 113480) (Microsporum canis)).